Consider the following 472-residue polypeptide: MEGGRLGGAAASASAAAAADARGGMSGFAAPQHAIHTNLNNVQPTQVTDFGALAQSAGFRIEDLANLSTNGLFNLKSNAHTIINDPLQFENYVKSISPSNITTTATVTVVDPQTLVPQKGAQLNLVTIRTGNVENWGESTIADTSPRTDTSTDPDTDERNQMFEQGQLAAPTASDSSDRSKDKLDHKTLRRLAQNREAARKSRLRKKAYIQNLESSRLKLTQIEQELQRARQQGIFISTSSDQSHSASGNGALAFDMEYARWLEEHNKHINELRAAVNAHAGDNDLKSTVDSIMAHYNEIFKLKGVAAKADVFHVLSGMWKTPAERCFMWLGGFRSSELLKLLAGQLEPLTEQQLAGIANLQQSSQQAEDALSQGMEALQQSLAETLASGSLGPAGSSGNVANYMGQMAMAMGKLGTLENFLRQADNLRLQTLQQMQRILTTRQSARALLAISDYFSRLRALSSLWLARPRE.

A disordered region spans residues 136–190 (WGESTIADTSPRTDTSTDPDTDERNQMFEQGQLAAPTASDSSDRSKDKLDHKTLR). Positions 143–153 (DTSPRTDTSTD) are enriched in low complexity. Residues 176 to 187 (SSDRSKDKLDHK) are compositionally biased toward basic and acidic residues. Residues 185–229 (DHKTLRRLAQNREAARKSRLRKKAYIQNLESSRLKLTQIEQELQR) enclose the bZIP domain. The basic motif stretch occupies residues 187–207 (KTLRRLAQNREAARKSRLRKK). A leucine-zipper region spans residues 213 to 227 (LESSRLKLTQIEQEL). The DOG1 domain occupies 252 to 469 (ALAFDMEYAR…RALSSLWLAR (218 aa)).

It belongs to the bZIP family. Isoforms 1 and 2 interact with NPR2/NH2. Isoform 2 interacts with NPR1/NH1 and NPR3/NH3.

It localises to the nucleus. Its function is as follows. Transcriptional regulator involved in defense response. The chain is Transcription factor TGAL1 from Oryza sativa subsp. japonica (Rice).